Reading from the N-terminus, the 391-residue chain is uncharacterized protein (391 aa).

This sequence belongs to the mycobacterial PPE family.

This is an uncharacterized protein from Mycobacterium tuberculosis (strain CDC 1551 / Oshkosh).